We begin with the raw amino-acid sequence, 476 residues long: 4-(hydroxymethyl)benzenesulfonate dehydrogenase TsaD1 (476 aa).

Residues 154–155 (WN), 178–181 (KAAE), and 230–231 (GS) contribute to the NAD(+) site. Catalysis depends on E252, which acts as the Proton acceptor. Residue L253 coordinates NAD(+). The active-site Nucleophile is the C286. E380 is an NAD(+) binding site.

This sequence belongs to the aldehyde dehydrogenase family. As to quaternary structure, homodimer.

It carries out the reaction 4-(hydroxymethyl)benzenesulfonate + NAD(+) = 4-formylbenzenesulfonate + NADH + H(+). In terms of biological role, involved in the toluene-4-sulfonate degradation pathway. Does not discriminate between the sulfonate and the carboxyl substituents and can also be involved in the p-toluenecarboxylate degradation pathway. The sequence is that of 4-(hydroxymethyl)benzenesulfonate dehydrogenase TsaD1 (tsaD1) from Comamonas testosteroni (Pseudomonas testosteroni).